The sequence spans 218 residues: GTP cyclohydrolase 1 (218 aa).

Zn(2+)-binding residues include cysteine 109, histidine 112, and cysteine 180.

This sequence belongs to the GTP cyclohydrolase I family. As to quaternary structure, toroid-shaped homodecamer, composed of two pentamers of five dimers.

It carries out the reaction GTP + H2O = 7,8-dihydroneopterin 3'-triphosphate + formate + H(+). It participates in cofactor biosynthesis; 7,8-dihydroneopterin triphosphate biosynthesis; 7,8-dihydroneopterin triphosphate from GTP: step 1/1. This Mannheimia succiniciproducens (strain KCTC 0769BP / MBEL55E) protein is GTP cyclohydrolase 1.